A 553-amino-acid chain; its full sequence is Transcriptional regulator HilA (553 aa).

Positions 11-107 form a DNA-binding region, ompR/PhoB-type; sequence NKKFVFDDFI…LYGQGYRFNR (97 aa). D62 is subject to 4-aspartylphosphate. The TPR repeat unit spans residues 372 to 405; it reads ADIKYYYGWNLFMAGQLEEALQTINECLKLDPTR.

The main transcriptional regulator of the Salmonella pathogenicity island 1 (SPI1) gene expression. Activates the expression of invasion genes by a direct action at their promoters and also indirectly by increasing the level of invF. Also binds upstream of prgH and directly activates the expression of prgHIJK operon. This Salmonella paratyphi A (strain ATCC 9150 / SARB42) protein is Transcriptional regulator HilA (hilA).